The primary structure comprises 88 residues: UPF0473 protein CLL_A1177 (88 aa).

It belongs to the UPF0473 family.

The sequence is that of UPF0473 protein CLL_A1177 from Clostridium botulinum (strain Eklund 17B / Type B).